Reading from the N-terminus, the 210-residue chain is MSDQAKDERAPSEAEAAEANAERTEGSIDGDYEALVRLLKENEELKDRALRVAAEMENLRRRTARDVHDARTYAVANFARDMLSVSDNLRRALDAIPAEAKASGDAGFKALIEGVDLTERAMLSALERHGVKKLAPEGEKFDPNFHQAMFEVPNPDVPANTVVQVVQPGYSIGERVLRPAMVGVAKGGPKIAAEAPVEPGPVNEQAEKDA.

Residues 1–12 (MSDQAKDERAPS) are compositionally biased toward basic and acidic residues. Disordered regions lie at residues 1–26 (MSDQ…RTEG) and 191–210 (IAAE…EKDA).

The protein belongs to the GrpE family. As to quaternary structure, homodimer.

The protein resides in the cytoplasm. In terms of biological role, participates actively in the response to hyperosmotic and heat shock by preventing the aggregation of stress-denatured proteins, in association with DnaK and GrpE. It is the nucleotide exchange factor for DnaK and may function as a thermosensor. Unfolded proteins bind initially to DnaJ; upon interaction with the DnaJ-bound protein, DnaK hydrolyzes its bound ATP, resulting in the formation of a stable complex. GrpE releases ADP from DnaK; ATP binding to DnaK triggers the release of the substrate protein, thus completing the reaction cycle. Several rounds of ATP-dependent interactions between DnaJ, DnaK and GrpE are required for fully efficient folding. This chain is Protein GrpE, found in Mesorhizobium japonicum (strain LMG 29417 / CECT 9101 / MAFF 303099) (Mesorhizobium loti (strain MAFF 303099)).